Consider the following 691-residue polypeptide: MGSNGTEEITSDISTGNAATTIEIKIKMLDSQTFTLRVDKQMPVPALKAQIESLTGVMSERQRLICQGKVLKDDQLLSAYHVEDGHTLHLVARHPDLTPPGSLPNHSATEPNSSTGHGYSNQVAPGVFIETFNVPVQGDGVPSEINRIVSAVLGSMGLPNFASGGEGIFVREHDSTGLGRTSDFTGNPSRPQPEQAGFRISSDSSRNSFGFPAAVSLGSLGSLQPPVIPDSLTTLLQYLSHINHEFDTIAREGGNNVQAAEAHRNEERGFVSSRLSSTPEGLSSPASLAEVLLSTRRVIIEQAGECLLQLARQLENHADIADPLSRSSTQSRALRTGVMFYNLGAYLLELGRTTMTLRLGQTPSEAVVNGGPAVFISPSGPNHIMVQPLPFQPGASFGAIPVGAAQSNSSLGGGLGSSFFPRRIDIQIRRGASTTPGTNQEEHGDTQSASVQRNTGESSVNQTTSRRPDASIAGEPGVRVVPIRTMVAAVPVLGRFQSSVNTNNEQGSQPASQQHTAPHSTAEFTLHRQSMEDSARNGTLPTPNTQQEPSSSRVVNINILSAGGPENNESERQVPSSVLQFLRALFPGGEIHVEDPSSQGTTAGVTSAATSSGAAQAPEAEPNVSEEGIFLSNLLRGIMPVISQHIGRGGDSSEDQVTRDPSTQVEIGAGTSRRQSDSESSPPNSKRQKME.

The Ubiquitin-like domain occupies 22-97 (IEIKIKMLDS…LHLVARHPDL (76 aa)). Disordered regions lie at residues 92–118 (ARHPDLTPPGSLPNHSATEPNSSTGHG), 176–203 (TGLGRTSDFTGNPSRPQPEQAGFRISSD), 264–283 (RNEERGFVSSRLSSTPEGLS), 432–473 (ASTT…ASIA), 499–554 (SVNT…SSRV), 590–624 (EIHVEDPSSQGTTAGVTSAATSSGAAQAPEAEPNV), and 645–691 (HIGR…QKME). Polar residues-rich tracts occupy residues 104-118 (PNHSATEPNSSTGHG), 178-189 (LGRTSDFTGNPS), 273-283 (SRLSSTPEGLS), 446-465 (TQSASVQRNTGESSVNQTTS), and 499-523 (SVNTNNEQGSQPASQQHTAPHSTAE). Residues 525–535 (TLHRQSMEDSA) show a composition bias toward basic and acidic residues. Residues 536-554 (RNGTLPTPNTQQEPSSSRV) show a composition bias toward polar residues. Over residues 597-617 (SSQGTTAGVTSAATSSGAAQA) the composition is skewed to low complexity.

As to quaternary structure, interacts with CCAMK. In terms of processing, phosphorylated at the N-terminus by CCAMK. As to expression, highly epressed in roots. Expressed at very low levels in leaves and stems.

Its subcellular location is the nucleus. Functionally, involved in root nodulation. Required for root nodule organogenesis after infection by symbiotic rhizobia. Probably not involved in arbuscular mycorrhizal (AM) symbiosis. Acts downstream of CCAMK. The sequence is that of Ubiquitin-like domain-containing protein CIP73 from Lotus japonicus (Lotus corniculatus var. japonicus).